The primary structure comprises 276 residues: Apulose-4-phosphate transketolase subunit A (276 aa).

It belongs to the transketolase family. Probable heterodimer composed of AptA and AptB. The cofactor is thiamine diphosphate.

It catalyses the reaction apulose 4-phosphate + D-glyceraldehyde 3-phosphate = D-xylulose 5-phosphate + dihydroxyacetone phosphate. Its pathway is carbohydrate metabolism. Involved in catabolism of D-apiose. Catalyzes the transfer of the glycolaldehyde group from apulose-4-phosphate to D-glyceraldehyde 3-phosphate, generating dihydroxyacetone phosphate and D-xylulose-5-phosphate. The chain is Apulose-4-phosphate transketolase subunit A from Actinobacillus succinogenes (strain ATCC 55618 / DSM 22257 / CCUG 43843 / 130Z).